The sequence spans 501 residues: Glycerol kinase (501 aa).

Thr-12 provides a ligand contact to ADP. ATP-binding residues include Thr-12, Thr-13, and Ser-14. Thr-12 lines the sn-glycerol 3-phosphate pocket. Arg-16 is a binding site for ADP. Residues Arg-82, Glu-83, Tyr-134, and Asp-244 each contribute to the sn-glycerol 3-phosphate site. Glycerol contacts are provided by Arg-82, Glu-83, Tyr-134, Asp-244, and Gln-245. Thr-266 and Gly-310 together coordinate ADP. Positions 266, 310, 314, and 411 each coordinate ATP. ADP contacts are provided by Gly-411 and Asn-415.

The protein belongs to the FGGY kinase family.

It catalyses the reaction glycerol + ATP = sn-glycerol 3-phosphate + ADP + H(+). It participates in polyol metabolism; glycerol degradation via glycerol kinase pathway; sn-glycerol 3-phosphate from glycerol: step 1/1. Inhibited by fructose 1,6-bisphosphate (FBP). Key enzyme in the regulation of glycerol uptake and metabolism. Catalyzes the phosphorylation of glycerol to yield sn-glycerol 3-phosphate. This chain is Glycerol kinase, found in Methylobacterium radiotolerans (strain ATCC 27329 / DSM 1819 / JCM 2831 / NBRC 15690 / NCIMB 10815 / 0-1).